The primary structure comprises 200 residues: Small ribosomal subunit protein uS4 (200 aa).

Residues 22–41 (TGKEIEKRPYAPGQHGPNQR) form a disordered region. The 61-residue stretch at 92-152 (TRLDNLVYRL…EKSQNLAVVG (61 aa)) folds into the S4 RNA-binding domain.

This sequence belongs to the universal ribosomal protein uS4 family. As to quaternary structure, part of the 30S ribosomal subunit. Contacts protein S5. The interaction surface between S4 and S5 is involved in control of translational fidelity.

Functionally, one of the primary rRNA binding proteins, it binds directly to 16S rRNA where it nucleates assembly of the body of the 30S subunit. With S5 and S12 plays an important role in translational accuracy. The sequence is that of Small ribosomal subunit protein uS4 from Lysinibacillus sphaericus (strain C3-41).